A 451-amino-acid chain; its full sequence is Signal transduction histidine-protein kinase ArlS (451 aa).

2 helical membrane passes run 11–31 (IIVT…IIIF) and 156–176 (IIAL…SYVF). One can recognise an HAMP domain in the interval 178–231 (TQITKPLVSLSNKMIEIRRDGFQNKLQLNTNYEEIDNLANTFNEMMSQIEESFN). One can recognise a Histidine kinase domain in the interval 239 to 451 (DASHELRTPL…NKGTTFKIIF (213 aa)). The residue at position 242 (histidine 242) is a Phosphohistidine; by autocatalysis.

In terms of processing, autophosphorylated.

It localises to the cell membrane. The enzyme catalyses ATP + protein L-histidine = ADP + protein N-phospho-L-histidine.. In terms of biological role, member of the two-component regulatory system ArlS/ArlR involved in the regulation of adhesion, autolysis, multidrug resistance and virulence. ArlS probably functions as a sensor protein kinase which is autophosphorylated at a histidine residue and transfers its phosphate group to ArlR. The protein is Signal transduction histidine-protein kinase ArlS (arlS) of Staphylococcus aureus (strain bovine RF122 / ET3-1).